The chain runs to 312 residues: uncharacterized protein (312 aa).

The next 10 helical transmembrane spans lie at 13–33 (AAGT…SIWI), 45–65 (AVLL…FLIY), 81–101 (ACGA…IGLN), 105–125 (AMVE…FTAC), 133–153 (IQDL…LGGW), 162–182 (MIGA…LVLS), 198–218 (GMTA…AAGM), 229–249 (MYGL…VLML), 260–280 (AAAI…LFLG), and 283–303 (LGLI…GMEY). The 131-residue stretch at 173–303 (AVYAGYLVLS…VFFVITGMEY (131 aa)) folds into the EamA domain.

It belongs to the EamA transporter family.

The protein resides in the cell membrane. This is an uncharacterized protein from Bacillus subtilis (strain 168).